We begin with the raw amino-acid sequence, 82 residues long: Small ribosomal subunit protein uS17 (82 aa).

This sequence belongs to the universal ribosomal protein uS17 family. Part of the 30S ribosomal subunit.

Functionally, one of the primary rRNA binding proteins, it binds specifically to the 5'-end of 16S ribosomal RNA. This is Small ribosomal subunit protein uS17 from Shewanella frigidimarina (strain NCIMB 400).